The chain runs to 361 residues: Prostaglandin D2 receptor (361 aa).

The Extracellular segment spans residues 1–21; it reads MRPLFYRCHNTTSVEKGNSAT. Residue N10 is glycosylated (N-linked (GlcNAc...) asparagine). Residues 22 to 42 form a helical membrane-spanning segment; the sequence is MGGVLFSTGLVGNLLALGLLA. Over 43-58 the chain is Cytoplasmic; the sequence is RSGLGSCPPRSPRPPP. A helical membrane pass occupies residues 59–79; sequence SVFYVLVFGLTITDLLGKCLV. The Extracellular segment spans residues 80–107; that stretch reads SPFVLSAYAQNRSLRELVPGSDSSLCQA. N90 carries N-linked (GlcNAc...) asparagine glycosylation. The cysteines at positions 105 and 183 are disulfide-linked. Residues 108–128 form a helical membrane-spanning segment; that stretch reads FAFIMSFFGLASTLQLLAMAL. The Cytoplasmic portion of the chain corresponds to 129–150; that stretch reads ECWLSLGHPFFHRRHLTPRRGA. A helical membrane pass occupies residues 151-171; the sequence is MVAPVVGAFCLAFCALPLVGF. The Extracellular portion of the chain corresponds to 172 to 195; the sequence is GKFVQYCPGTWCFFQMVHEERSLS. Residues 196-216 form a helical membrane-spanning segment; the sequence is VLSYSVLYASLMLLLVLAIVL. Residues 217–262 lie on the Cytoplasmic side of the membrane; it reads CNLSAMRNLYAMHLRLRGLLRPGSRERAEPGAGEREATPLHLEELD. Residues 263 to 283 traverse the membrane as a helical segment; that stretch reads HLLLLALMTVLFTMCSLPLIY. The Extracellular segment spans residues 284–310; that stretch reads RAYYGAFKAVPEQNGTTEETEDLRALR. N297 carries an N-linked (GlcNAc...) asparagine glycan. A helical transmembrane segment spans residues 311-331; it reads FLSVISIVDPWIFIIFRTSVF. The Cytoplasmic portion of the chain corresponds to 332-361; that stretch reads RMFFRKIFIRPLIYRNWHSNSCQTNMESSL.

This sequence belongs to the G-protein coupled receptor 1 family.

The protein localises to the cell membrane. In terms of biological role, receptor for prostaglandin D2 (PGD2). The activity of this receptor is mainly mediated by G(s) proteins that stimulate adenylate cyclase, resulting in an elevation of intracellular cAMP. A mobilization of calcium is also observed, but without formation of inositol 1,4,5-trisphosphate. Involved in PLA2G3-dependent maturation of mast cells. PLA2G3 is secreted by immature mast cells and acts on nearby fibroblasts upstream to PTDGS to synthesize PGD2, which in turn promotes mast cell maturation and degranulation via PTGDR. The chain is Prostaglandin D2 receptor (PTGDR) from Bos taurus (Bovine).